A 224-amino-acid chain; its full sequence is ATP-dependent dethiobiotin synthetase BioD (224 aa).

An ATP-binding site is contributed by 13-18 (NVGKTI). T17 is a Mg(2+) binding site. Residue K38 is part of the active site. Substrate is bound at residue S42. ATP-binding positions include D55, 116-119 (EGAG), 176-177 (NN), and N211. Positions 55 and 116 each coordinate Mg(2+).

This sequence belongs to the dethiobiotin synthetase family. Homodimer. Requires Mg(2+) as cofactor.

Its subcellular location is the cytoplasm. It carries out the reaction (7R,8S)-7,8-diammoniononanoate + CO2 + ATP = (4R,5S)-dethiobiotin + ADP + phosphate + 3 H(+). The protein operates within cofactor biosynthesis; biotin biosynthesis; biotin from 7,8-diaminononanoate: step 1/2. Its function is as follows. Catalyzes a mechanistically unusual reaction, the ATP-dependent insertion of CO2 between the N7 and N8 nitrogen atoms of 7,8-diaminopelargonic acid (DAPA, also called 7,8-diammoniononanoate) to form a ureido ring. This is ATP-dependent dethiobiotin synthetase BioD from Buchnera aphidicola subsp. Acyrthosiphon pisum (strain 5A).